A 643-amino-acid chain; its full sequence is Aspartic protease 3 (643 aa).

An N-terminal signal peptide occupies residues 1–31; it reads MEGRTTAGRATPAGFWLFSCCLASVLWSANA. Positions 87-99 are enriched in low complexity; sequence APEVSGAAGASAS. The segment at 87–116 is disordered; sequence APEVSGAAGASASKTSEKPIRPYHTGPSSR. The region spanning 281–600 is the Peptidase A1 domain; sequence YVGVIGIGTP…GTRPSLVGIA (320 aa). Catalysis depends on residues D299 and D490.

The protein belongs to the peptidase A1 family.

Its subcellular location is the endomembrane system. With respect to regulation, inhibited by 49c, a hydroxyethylamine scaffold-based compound. Functionally, required for the processing-mediated maturation of a subset of microneme proteins, such as MIC6, and rhoptry proteins, such as ROP1. By regulating microneme and rhoptry processing, plays an essential role in the lysis of the host cell membrane during egress and in rhoptry content discharge, which is required for invasion of host cells. This Toxoplasma gondii protein is Aspartic protease 3.